Here is a 380-residue protein sequence, read N- to C-terminus: Ribosomal RNA large subunit methyltransferase G (380 aa).

It belongs to the methyltransferase superfamily. RlmG family.

It is found in the cytoplasm. The enzyme catalyses guanosine(1835) in 23S rRNA + S-adenosyl-L-methionine = N(2)-methylguanosine(1835) in 23S rRNA + S-adenosyl-L-homocysteine + H(+). Functionally, specifically methylates the guanine in position 1835 (m2G1835) of 23S rRNA. The polypeptide is Ribosomal RNA large subunit methyltransferase G (Aeromonas hydrophila subsp. hydrophila (strain ATCC 7966 / DSM 30187 / BCRC 13018 / CCUG 14551 / JCM 1027 / KCTC 2358 / NCIMB 9240 / NCTC 8049)).